The primary structure comprises 473 residues: Siroheme synthase (473 aa).

Residues 1–203 (MTLFPIFADL…QQPGLAEQEL (203 aa)) form a precorrin-2 dehydrogenase /sirohydrochlorin ferrochelatase region. Residues 22-23 (AV) and 43-44 (PR) contribute to the NAD(+) site. S128 is subject to Phosphoserine. Residues 216–473 (GSVVLVGAGP…GLPGPQALAA (258 aa)) form a uroporphyrinogen-III C-methyltransferase region. Residue P225 participates in S-adenosyl-L-methionine binding. Catalysis depends on D248, which acts as the Proton acceptor. Catalysis depends on K270, which acts as the Proton donor. Residues 302 to 304 (GGD), I307, 332 to 333 (TA), M384, and G413 each bind S-adenosyl-L-methionine.

The protein in the N-terminal section; belongs to the precorrin-2 dehydrogenase / sirohydrochlorin ferrochelatase family. It in the C-terminal section; belongs to the precorrin methyltransferase family.

The catalysed reaction is uroporphyrinogen III + 2 S-adenosyl-L-methionine = precorrin-2 + 2 S-adenosyl-L-homocysteine + H(+). It carries out the reaction precorrin-2 + NAD(+) = sirohydrochlorin + NADH + 2 H(+). The enzyme catalyses siroheme + 2 H(+) = sirohydrochlorin + Fe(2+). It functions in the pathway cofactor biosynthesis; adenosylcobalamin biosynthesis; precorrin-2 from uroporphyrinogen III: step 1/1. Its pathway is cofactor biosynthesis; adenosylcobalamin biosynthesis; sirohydrochlorin from precorrin-2: step 1/1. The protein operates within porphyrin-containing compound metabolism; siroheme biosynthesis; precorrin-2 from uroporphyrinogen III: step 1/1. It participates in porphyrin-containing compound metabolism; siroheme biosynthesis; siroheme from sirohydrochlorin: step 1/1. It functions in the pathway porphyrin-containing compound metabolism; siroheme biosynthesis; sirohydrochlorin from precorrin-2: step 1/1. In terms of biological role, multifunctional enzyme that catalyzes the SAM-dependent methylations of uroporphyrinogen III at position C-2 and C-7 to form precorrin-2 via precorrin-1. Then it catalyzes the NAD-dependent ring dehydrogenation of precorrin-2 to yield sirohydrochlorin. Finally, it catalyzes the ferrochelation of sirohydrochlorin to yield siroheme. The sequence is that of Siroheme synthase from Bordetella parapertussis (strain 12822 / ATCC BAA-587 / NCTC 13253).